The following is a 392-amino-acid chain: Type III polyketide synthase B (392 aa).

Residue Lys-57–Thr-64 participates in CoA binding. The active-site Nucleophile is the Cys-166. Gly-218–Asp-219 lines the substrate pocket. CoA is bound by residues Leu-269, Gly-309 to Ala-312, and Ala-312.

The protein belongs to the thiolase-like superfamily. Chalcone/stilbene synthases family. Homodimer. Interacts with 4CLL1/ACOS5 and TKPR1. Expressed in flowers and flower buds (at protein level). Mostly confined to anther tapetal cells.

It localises to the endoplasmic reticulum. The protein operates within secondary metabolite biosynthesis; flavonoid biosynthesis. Its function is as follows. Plant type III polyketide synthases (PKSs) that catalyzes the condensation of malonyl-CoA units with various CoA ester starter molecules to generate a diverse array of natural products including long-chain alkyl alpha-pyrones. Accepts up to C(20) chain-length fatty acyl CoAs as starter substrates, and carries out sequential condensations with malonyl-CoA to produce triketide and tetraketide alpha-pyrones, potential sporopollenin precursors. Favorite substrates for are midchain- and v-hydroxylated fatty acyl-CoAs (e.g. 12-hydroxyoctadecanoyl-CoA and 16-hydroxyhexadecanoyl-CoA). Required for pollen development and sporopollenin biosynthesis, the major constituent of exine in the outer pollen wall. In vitro, can use 4-coumaroyl-coenzyme A as substrate to produce bis-noryangonin and fatty acyl-coenzyme A as substrate to produce medium-chain alkyl pyrones. May play a role in both the synthesis of pollen fatty acids and phenolics found in exine. The chain is Type III polyketide synthase B from Arabidopsis thaliana (Mouse-ear cress).